The following is a 212-amino-acid chain: Membrane-bound lytic murein transglycosylase E (212 aa).

Belongs to the transglycosylase Slt family.

It carries out the reaction Exolytic cleavage of the (1-&gt;4)-beta-glycosidic linkage between N-acetylmuramic acid (MurNAc) and N-acetylglucosamine (GlcNAc) residues in peptidoglycan, from either the reducing or the non-reducing ends of the peptidoglycan chains, with concomitant formation of a 1,6-anhydrobond in the MurNAc residue.. Functionally, murein-degrading enzyme. May play a role in recycling of muropeptides during cell elongation and/or cell division. The polypeptide is Membrane-bound lytic murein transglycosylase E (mltE) (Buchnera aphidicola subsp. Baizongia pistaciae (strain Bp)).